The primary structure comprises 376 residues: Rhodopsin (376 aa).

Residues 1–51 lie on the Extracellular side of the membrane; that stretch reads MSLINEPSYSAYSWGGQGGYGNQTVVDKVLPEMLHLIDPHWYQFPPMNPLW. Asparagine 22 carries an N-linked (GlcNAc...) asparagine glycan. Residues 52 to 76 form a helical membrane-spanning segment; that stretch reads HGLLGFVIGCLGFVSVVGNGMVIYI. The Cytoplasmic segment spans residues 77-88; the sequence is FSTTKGLRTPSN. A helical transmembrane segment spans residues 89–113; the sequence is LLVVNLAFSDFLMMLSMSPPMVINC. The Extracellular segment spans residues 114–128; the sequence is YYETWVLGPFMCELY. A disulfide bridge links cysteine 125 with cysteine 202. The helical transmembrane segment at 129–148 threads the bilayer; that stretch reads ALLGSLFGCGSIWTMVMIAL. The Cytoplasmic portion of the chain corresponds to 149-167; sequence DRYNVIVKGLAAKPMTNKT. Residues 168–191 form a helical membrane-spanning segment; that stretch reads AMLRILGIWAMSIAWTVFPLFGWN. The Extracellular portion of the chain corresponds to 192-215; it reads RYVPEGNMTACGTDYLNKEWVSRS. Residue asparagine 198 is glycosylated (N-linked (GlcNAc...) asparagine). The chain crosses the membrane as a helical span at residues 216 to 243; the sequence is YILVYSVFVYFLPLATIIYSYWFIVQAV. Topologically, residues 244–278 are cytoplasmic; sequence SAHEKQMREQAKKMNVASLRSAENANTSAECKLAK. A helical transmembrane segment spans residues 279-302; that stretch reads VALMTISLWFFAWTPYLVTDFSGI. At 303 to 309 the chain is on the extracellular side; the sequence is FEWGKIS. The helical transmembrane segment at 310-334 threads the bilayer; the sequence is PLATIWCSLFAKANAVYNPIVYGIS. At lysine 321 the chain carries N6-(retinylidene)lysine. Residues 335-376 are Cytoplasmic-facing; sequence HPKYRAALNKKFPSLACASEPDDTASQASGATTVSDEKSASA. The tract at residues 353-376 is disordered; that stretch reads SEPDDTASQASGATTVSDEKSASA. Positions 358 to 368 are enriched in polar residues; that stretch reads TASQASGATTV.

This sequence belongs to the G-protein coupled receptor 1 family. Opsin subfamily. In terms of processing, phosphorylated on some or all of the serine and threonine residues present in the C-terminal region.

It localises to the membrane. Functionally, visual pigments are the light-absorbing molecules that mediate vision. They consist of an apoprotein, opsin, covalently linked to cis-retinal. This Sphodromantis sp. (Mantis) protein is Rhodopsin.